The chain runs to 1175 residues: Solute carrier family 9 member C1 (1175 aa).

Residues 1 to 39 (MEMEEISENLTASHSIKLTNMWLELLKSVFLSTPQDLPE) lie on the Extracellular side of the membrane. A helical membrane pass occupies residues 40–59 (IILILSLICTVGAFLNMHLK). Topologically, residues 60–64 (DFPIP) are cytoplasmic. A helical membrane pass occupies residues 65 to 82 (LPVILFLIGCCFEILSFA). The Extracellular portion of the chain corresponds to 83 to 98 (STQIQIYADAIQWMDP). The helical transmembrane segment at 99–115 (DIFFGIFTPVIIFNVAF) threads the bilayer. Topologically, residues 116–125 (DMDIYMLQKL) are cytoplasmic. Residues 126–151 (FWQILVITIPGFLINYTLILWYLQSV) form a helical membrane-spanning segment. Positions 126–213 (FWQILVITIP…SLVIYSGVVH (88 aa)) are transport core domain. Residues 152–157 (NKLSLK) are Extracellular-facing. The helical transmembrane segment at 158–183 (TVPWLLFSAVLISSDPMLTSASIRDL) threads the bilayer. Residues 184–186 (GLS) lie on the Cytoplasmic side of the membrane. The helical transmembrane segment at 187-212 (RSLTNLINGESLLTSVLSLVIYSGVV) threads the bilayer. Topologically, residues 213–225 (HIRFKSKSVNHTL) are extracellular. Residues 226-257 (AHKVMSTAWSYIVESFITGIVFTKVIQLWMAT) form a helical membrane-spanning segment. The Cytoplasmic portion of the chain corresponds to 258 to 261 (IFGD). Residues 262-283 (DVNHITLIFSVLYLIFYVCELV) traverse the membrane as a helical segment. The Extracellular segment spans residues 284–286 (GMS). A helical membrane pass occupies residues 287–300 (GIFTLATIGLFLNS). Residues 301–307 (TSFKPGV) lie on the Cytoplasmic side of the membrane. Residues 308 to 339 (EAFLLEFWNCLSFIGFLMVFTFIGLLIPAHTY) traverse the membrane as a helical segment. At 340–344 (LHISF) the chain is on the extracellular side. Residues 345 to 374 (SDVYYSLNIYFTLIVLRLLVFLLMSPILSR) traverse the membrane as a helical segment. A transport core domain region spans residues 345–446 (SDVYYSLNIY…FILPMAVTKL (102 aa)). Residues 375–380 (LGHGFS) lie on the Cytoplasmic side of the membrane. The chain crosses the membrane as a helical span at residues 381 to 411 (WRWAFIMVWSEMKGTPNINMALLLAYSDISL). At 412–415 (GSER) the chain is on the extracellular side. The chain crosses the membrane as a helical span at residues 416–446 (ERSQILFHGVSVCVITLIVNRFILPMAVTKL). At 447 to 632 (GLRDVTSTKY…ACHRIVFTNE (186 aa)) the chain is on the cytoplasmic side. Positions 618–698 (YMFLHACHRI…EFFSHTWLLF (81 aa)) are ion transport-like. The helical transmembrane segment at 633 to 653 (FEYTGYLVVLMSTYPMIICWI) threads the bilayer. Over 654–657 (SRLK) the chain is Extracellular. Residues 658–684 (DIYDNEIKCANYYFLAFYILEALLKVA) form a helical membrane-spanning segment. Over 685–691 (AMRKEFF) the chain is Cytoplasmic. The helical transmembrane segment at 692-716 (SHTWLLFELGITLVGVLDIILIETD) threads the bilayer. Topologically, residues 717–724 (SISYNFDL) are extracellular. The helical transmembrane segment at 725–751 (TETVVFMNVIRLLRILRILKLVTPKLL) threads the bilayer. At 752-1175 (QIIDKRMSQQ…EELIEENINI (424 aa)) the chain is on the cytoplasmic side. Residues 1137–1146 (MKPDSERESF) show a composition bias toward basic and acidic residues. The segment at 1137-1175 (MKPDSERESFETLDETSEEDNGKKENQENEELIEENINI) is disordered. The span at 1164–1175 (ENEELIEENINI) shows a compositional bias: acidic residues.

This sequence belongs to the monovalent cation:proton antiporter 1 (CPA1) transporter (TC 2.A.36) family. As to quaternary structure, interacts with soluble adenylyl cyclase (sAC). As to expression, testis-specific. Specifically present in the principal piece of sperm tail (at protein level).

It localises to the cell projection. Its subcellular location is the cilium. The protein localises to the flagellum membrane. Functionally, sperm-specific solute carrier involved in intracellular pH regulation of spermatozoa. Required for sperm motility and fertility. Involved in sperm cell hyperactivation, a step needed for sperm motility which is essential late in the preparation of sperm for fertilization. Required for the expression and bicarbonate regulation of the soluble adenylyl cyclase (sAC). This is Solute carrier family 9 member C1 (Slc9c1) from Mus musculus (Mouse).